Here is a 56-residue protein sequence, read N- to C-terminus: Mitoregulin (56 aa).

At 2–9 (ADVSERTL) the chain is on the mitochondrial matrix side. A helical transmembrane segment spans residues 10-27 (QLSVLVAFASGVLLGWQA). At 28-56 (NRLRRRYLDWRKRRLQDKLAATQKKLDLA) the chain is on the mitochondrial intermembrane side.

As to quaternary structure, interacts with mitochondrial trifunctional enzyme, a heterotetrameric complex composed of 2 HADHA subunits and 2 HADHB subunits. Interacts with cytochrome b5 reductase CYB5R3; the interaction is required to maintain cellular lipid composition and leads to stimulation of mitochondrial respiratory complex I activity. Interacts with ATP synthase subunit ATP5F1B/ATP5B.

The protein localises to the mitochondrion inner membrane. Positively regulates mitochondrial complex assembly and/or stability. Increases mitochondrial membrane potential while decreasing mitochondrial reactive oxygen species. Increases mitochondrial respiration rate. Increased mitochondrial respiratory activity promotes myogenic differentiation which facilitates muscle growth and regeneration. Increases mitochondrial calcium retention capacity. Plays a role in maintenance of cellular lipid composition through its interaction with cytochrome b5 reductase CYB5R3 which is required for mitochondrial respiratory complex I activity. Interacts with the mitochondrial trifunctional enzyme complex (MTE) and enhances fatty acid beta-oxidation. Not required for MTE formation or stability. Modulates triglyceride clearance in adipocytes through its role in regulating fatty acid beta-oxidation and lipolysis. In Homo sapiens (Human), this protein is Mitoregulin.